Reading from the N-terminus, the 635-residue chain is Phosphomethylpyrimidine synthase (635 aa).

Over residues 1-14 (MNATVSSAVQSSLP) the composition is skewed to polar residues. The tract at residues 1-41 (MNATVSSAVQSSLPFSGKTAQVDEGTVKPLPRSQKTYLSGS) is disordered. Residues N240, M269, Y298, H334, 354–356 (SRG), 395–398 (DGLR), and E434 contribute to the substrate site. H438 contacts Zn(2+). Y461 is a binding site for substrate. Residue H502 participates in Zn(2+) binding. Positions 582, 585, and 590 each coordinate [4Fe-4S] cluster.

This sequence belongs to the ThiC family. In terms of assembly, homodimer. It depends on [4Fe-4S] cluster as a cofactor.

It catalyses the reaction 5-amino-1-(5-phospho-beta-D-ribosyl)imidazole + S-adenosyl-L-methionine = 4-amino-2-methyl-5-(phosphooxymethyl)pyrimidine + CO + 5'-deoxyadenosine + formate + L-methionine + 3 H(+). It functions in the pathway cofactor biosynthesis; thiamine diphosphate biosynthesis. Functionally, catalyzes the synthesis of the hydroxymethylpyrimidine phosphate (HMP-P) moiety of thiamine from aminoimidazole ribotide (AIR) in a radical S-adenosyl-L-methionine (SAM)-dependent reaction. This chain is Phosphomethylpyrimidine synthase, found in Nitrosospira multiformis (strain ATCC 25196 / NCIMB 11849 / C 71).